We begin with the raw amino-acid sequence, 341 residues long: MFVDKTLMITGGTGSFGNAVLSRFLKSNIINDIKEIRIFSRDEKKQEDMRIALNHSKLKFYIGDVRNYQSIDDAMHGVDYVFHAAALKQVPTCEFYPMEAINTNVLGAENVLSAAINNKVTKVIVLSTDKAVYPINAMGLSKALMEKLAIAKARMRSPGETILCVTRYGNVMASRGSVIPLFIHQIKQGKELTITEPSMTRFLMSLVDSVDLVLYAFEHGRQGDIFVQKSPASTIEVLAKALQEIFGSKNAIRFIGTRHGEKHYESLVSSEDMAKADDLGGYYRIPMDGRDLNYAKYFVEGEKKVALLKDYTSHNTKRLNLKEVKELLLTLDYVQEELKNA.

Belongs to the polysaccharide synthase family.

The catalysed reaction is UDP-alpha-D-glucose = UDP-alpha-D-galactose. Epimerizes UDP-galactose to UDP-glucose. The protein is UDP-glucose 4-epimerase (capD) of Rickettsia typhi (strain ATCC VR-144 / Wilmington).